The sequence spans 360 residues: MKPSIVAKLEALQERHEEVQALLGEPSVIADMDRFRALSREYAQLTDITRCFQQWQQAQEDQQTAEMMLDDPEMRDMAQEELKEGKAAIEALEQELQVLLLPKDPDDERGCFLEVRAGTGGDEAAIFAGDLFRMYSRYAESRRWRVEVMSASDGEHGGYKEVIAKISGDGVYGQLKFESGGHRVQRVPATESQGRIHTSACTVAVMAAVPEAELPDINPSDLRIDTFRSSGAGGQHVNTTDSAIRITHLPTGIVVECQDERSQHKNKAKALSVLGARIRAAEIHKRQQEEASTRRNLLGSGDRSDRIRTYNFPQGRVTDHRINLTLYRLDEVMEGKLDALIQPVVQEYQADQLAALSEQE.

Position 235 is an N5-methylglutamine (Gln235). Residues His284 to Thr293 are compositionally biased toward basic and acidic residues. Residues His284–Asp305 form a disordered region.

Belongs to the prokaryotic/mitochondrial release factor family. In terms of processing, methylated by PrmC. Methylation increases the termination efficiency of RF1.

It is found in the cytoplasm. Its function is as follows. Peptide chain release factor 1 directs the termination of translation in response to the peptide chain termination codons UAG and UAA. This is Peptide chain release factor 1 from Pectobacterium atrosepticum (strain SCRI 1043 / ATCC BAA-672) (Erwinia carotovora subsp. atroseptica).